Here is an 864-residue protein sequence, read N- to C-terminus: Arf-GAP with GTPase, ANK repeat and PH domain-containing protein 1 (864 aa).

Positions Ser66–Ser276 are small GTPase-like. In terms of domain architecture, GLD spans Arg67–Gly241. GTP contacts are provided by residues Gly78–Ser85, Ile122–Gly126, and Thr178–Ala181. Disordered stretches follow at residues Ser266–Gly343, Val405–Ser455, and Thr499–Thr549. The span at Leu275–Ser289 shows a compositional bias: low complexity. The segment covering Lys322–Ala337 has biased composition (basic and acidic residues). The region spanning Ile346–Leu591 is the PH domain. Residues Ala413–Leu428 are compositionally biased toward polar residues. The span at Ser507–Pro517 shows a compositional bias: low complexity. Basic residues predominate over residues Ala527 to Ser537. A compositionally biased stretch (polar residues) spans Thr538 to Thr549. The Arf-GAP domain occupies Ala612–Asp732. Residues Cys627–Cys650 form a C4-type zinc finger. ANK repeat units follow at residues Asp771–Ala800 and His804–Gln833. Over residues Lys845–Ala854 the composition is skewed to low complexity. The tract at residues Lys845–Ile864 is disordered.

This sequence belongs to the centaurin gamma-like family. Homodimer. Interacts with several subunits of the AP-3 protein complex.

Its subcellular location is the cytoplasm. In terms of biological role, GTPase-activating protein. Directly and specifically regulates the adapter protein 3 (AP-3)-dependent trafficking of proteins in the endosomal-lysosomal system. The polypeptide is Arf-GAP with GTPase, ANK repeat and PH domain-containing protein 1 (agap1) (Xenopus laevis (African clawed frog)).